Consider the following 362-residue polypeptide: S-adenosylmethionine:tRNA ribosyltransferase-isomerase (362 aa).

The protein belongs to the QueA family. In terms of assembly, monomer.

Its subcellular location is the cytoplasm. It carries out the reaction 7-aminomethyl-7-carbaguanosine(34) in tRNA + S-adenosyl-L-methionine = epoxyqueuosine(34) in tRNA + adenine + L-methionine + 2 H(+). Its pathway is tRNA modification; tRNA-queuosine biosynthesis. Functionally, transfers and isomerizes the ribose moiety from AdoMet to the 7-aminomethyl group of 7-deazaguanine (preQ1-tRNA) to give epoxyqueuosine (oQ-tRNA). The polypeptide is S-adenosylmethionine:tRNA ribosyltransferase-isomerase (Xanthobacter autotrophicus (strain ATCC BAA-1158 / Py2)).